The sequence spans 455 residues: ATP-dependent protease ATPase subunit HslU (455 aa).

Residues Val23, 65-70 (GVGKTE), Asp266, Glu333, and Arg405 each bind ATP.

This sequence belongs to the ClpX chaperone family. HslU subfamily. In terms of assembly, a double ring-shaped homohexamer of HslV is capped on each side by a ring-shaped HslU homohexamer. The assembly of the HslU/HslV complex is dependent on binding of ATP.

It localises to the cytoplasm. In terms of biological role, ATPase subunit of a proteasome-like degradation complex; this subunit has chaperone activity. The binding of ATP and its subsequent hydrolysis by HslU are essential for unfolding of protein substrates subsequently hydrolyzed by HslV. HslU recognizes the N-terminal part of its protein substrates and unfolds these before they are guided to HslV for hydrolysis. This is ATP-dependent protease ATPase subunit HslU from Xanthomonas oryzae pv. oryzae (strain MAFF 311018).